Here is a 173-residue protein sequence, read N- to C-terminus: ATP synthase subunit b (173 aa).

The chain crosses the membrane as a helical span at residues 19–39 (IVWSLIILVIVAVFFYKFFMP).

It belongs to the ATPase B chain family. As to quaternary structure, F-type ATPases have 2 components, F(1) - the catalytic core - and F(0) - the membrane proton channel. F(1) has five subunits: alpha(3), beta(3), gamma(1), delta(1), epsilon(1). F(0) has three main subunits: a(1), b(2) and c(10-14). The alpha and beta chains form an alternating ring which encloses part of the gamma chain. F(1) is attached to F(0) by a central stalk formed by the gamma and epsilon chains, while a peripheral stalk is formed by the delta and b chains.

It localises to the cell membrane. Its function is as follows. F(1)F(0) ATP synthase produces ATP from ADP in the presence of a proton or sodium gradient. F-type ATPases consist of two structural domains, F(1) containing the extramembraneous catalytic core and F(0) containing the membrane proton channel, linked together by a central stalk and a peripheral stalk. During catalysis, ATP synthesis in the catalytic domain of F(1) is coupled via a rotary mechanism of the central stalk subunits to proton translocation. Component of the F(0) channel, it forms part of the peripheral stalk, linking F(1) to F(0). The protein is ATP synthase subunit b of Bifidobacterium longum (strain NCC 2705).